Consider the following 323-residue polypeptide: Transcription factor JunD (323 aa).

Disordered regions lie at residues Gln138–Leu173 and Pro197–Pro221. The segment covering Leu141 to Glu167 has biased composition (gly residues). Over residues Phe198–Pro212 the composition is skewed to pro residues. The basic motif stretch occupies residues Arg242 to Arg269. The bZIP domain maps to Arg242–His305. Positions Leu270 to Leu298 are leucine-zipper.

The protein belongs to the bZIP family. Jun subfamily. In terms of assembly, binds DNA as a dimer.

The protein localises to the nucleus. The polypeptide is Transcription factor JunD (JUND) (Gallus gallus (Chicken)).